The sequence spans 278 residues: HTH-type transcriptional activator RhaS (278 aa).

The region spanning 174–272 (NLLLAWLEDH…NWSPRDIRQG (99 aa)) is the HTH araC/xylS-type domain. DNA-binding regions (H-T-H motif) lie at residues 191-212 (DAVA…KQQT) and 239-262 (VTDI…RREF).

As to quaternary structure, binds DNA as a dimer.

The protein resides in the cytoplasm. In terms of biological role, activates expression of the rhaBAD and rhaT operons. The sequence is that of HTH-type transcriptional activator RhaS from Shigella flexneri serotype 5b (strain 8401).